The sequence spans 338 residues: Phenylalanine--tRNA ligase alpha subunit (338 aa).

Glutamate 253 lines the Mg(2+) pocket.

The protein belongs to the class-II aminoacyl-tRNA synthetase family. Phe-tRNA synthetase alpha subunit type 1 subfamily. In terms of assembly, tetramer of two alpha and two beta subunits. Requires Mg(2+) as cofactor.

The protein resides in the cytoplasm. The catalysed reaction is tRNA(Phe) + L-phenylalanine + ATP = L-phenylalanyl-tRNA(Phe) + AMP + diphosphate + H(+). The polypeptide is Phenylalanine--tRNA ligase alpha subunit (Legionella pneumophila (strain Lens)).